The following is a 326-amino-acid chain: E3 ubiquitin-protein ligase SINAT3 (326 aa).

The interval 1–44 (MDLDSMDCTSTMDVTDDEEIHQDRHSYASVSKHHHTNNNTTNVN) is disordered. The RING-type zinc-finger motif lies at 63–99 (CPVCTNSMYPPIHQCHNGHTLCSTCKARVHNRCPTCR). The segment at 113–306 (VAESLELPCK…KELKLRVTGR (194 aa)) is SBD. Residues 116–176 (SLELPCKHMS…LVAHLRDDHK (61 aa)) form an SIAH-type zinc finger. Zn(2+)-binding residues include cysteine 121, cysteine 128, histidine 140, cysteine 144, cysteine 151, cysteine 158, histidine 170, and histidine 175.

The protein belongs to the SINA (Seven in absentia) family. Interacts with SINAT6. Interacts with WAV3. Interacts with FREE1. Interacts with ELC/VPS23A.

It is found in the endosome. The protein localises to the multivesicular body. The protein resides in the cytoplasmic vesicle. It localises to the autophagosome. The enzyme catalyses S-ubiquitinyl-[E2 ubiquitin-conjugating enzyme]-L-cysteine + [acceptor protein]-L-lysine = [E2 ubiquitin-conjugating enzyme]-L-cysteine + N(6)-ubiquitinyl-[acceptor protein]-L-lysine.. It functions in the pathway protein modification; protein ubiquitination. In terms of biological role, E3 ubiquitin-protein ligase that mediates ubiquitination and subsequent proteasomal degradation of target proteins. E3 ubiquitin ligases accept ubiquitin from an E2 ubiquitin-conjugating enzyme in the form of a thioester and then directly transfers the ubiquitin to targeted substrates. It probably triggers the ubiquitin-mediated degradation of different substrates. Modulates directly the ubiquitination and proteasomal-dependent degradation of FREE1, a component of the ESCRT-I complex. Modulates directly the ubiquitination and proteasomal-dependent degradation of ELC/VPS23A, a component of the ESCRT-I complex. In Arabidopsis thaliana (Mouse-ear cress), this protein is E3 ubiquitin-protein ligase SINAT3.